A 598-amino-acid chain; its full sequence is NADH-quinone oxidoreductase subunit C/D (598 aa).

The segment at 1-189 (MTDLTTSDSL…DPYVLTKQKE (189 aa)) is NADH dehydrogenase I subunit C. Residues 213-598 (DFMFLNLGPN…IDFVMSDVDR (386 aa)) form an NADH dehydrogenase I subunit D region.

In the N-terminal section; belongs to the complex I 30 kDa subunit family. The protein in the C-terminal section; belongs to the complex I 49 kDa subunit family. In terms of assembly, NDH-1 is composed of 13 different subunits. Subunits NuoB, CD, E, F, and G constitute the peripheral sector of the complex.

It is found in the cell inner membrane. The enzyme catalyses a quinone + NADH + 5 H(+)(in) = a quinol + NAD(+) + 4 H(+)(out). NDH-1 shuttles electrons from NADH, via FMN and iron-sulfur (Fe-S) centers, to quinones in the respiratory chain. The immediate electron acceptor for the enzyme in this species is believed to be ubiquinone. Couples the redox reaction to proton translocation (for every two electrons transferred, four hydrogen ions are translocated across the cytoplasmic membrane), and thus conserves the redox energy in a proton gradient. This chain is NADH-quinone oxidoreductase subunit C/D, found in Yersinia pseudotuberculosis serotype O:1b (strain IP 31758).